The sequence spans 45 residues: Large ribosomal subunit protein bL34 (45 aa).

The disordered stretch occupies residues 22–45 (RMRTKSGQNVIKARRRKGRARLTV). The span at 33–45 (KARRRKGRARLTV) shows a compositional bias: basic residues.

Belongs to the bacterial ribosomal protein bL34 family.

The sequence is that of Large ribosomal subunit protein bL34 from Thermosynechococcus vestitus (strain NIES-2133 / IAM M-273 / BP-1).